The primary structure comprises 446 residues: NADH-quinone oxidoreductase subunit D (446 aa).

The protein belongs to the complex I 49 kDa subunit family. In terms of assembly, NDH-1 is composed of 14 different subunits. Subunits NuoB, C, D, E, F, and G constitute the peripheral sector of the complex.

Its subcellular location is the cell membrane. It catalyses the reaction a quinone + NADH + 5 H(+)(in) = a quinol + NAD(+) + 4 H(+)(out). NDH-1 shuttles electrons from NADH, via FMN and iron-sulfur (Fe-S) centers, to quinones in the respiratory chain. The immediate electron acceptor for the enzyme in this species is believed to be a menaquinone. Couples the redox reaction to proton translocation (for every two electrons transferred, four hydrogen ions are translocated across the cytoplasmic membrane), and thus conserves the redox energy in a proton gradient. The protein is NADH-quinone oxidoreductase subunit D of Nocardioides sp. (strain ATCC BAA-499 / JS614).